Reading from the N-terminus, the 137-residue chain is Large-conductance mechanosensitive channel (137 aa).

Transmembrane regions (helical) follow at residues Phe-10–Gly-30 and Gly-76–Ile-96.

This sequence belongs to the MscL family. Homopentamer.

It is found in the cell inner membrane. Channel that opens in response to stretch forces in the membrane lipid bilayer. May participate in the regulation of osmotic pressure changes within the cell. In Escherichia coli O45:K1 (strain S88 / ExPEC), this protein is Large-conductance mechanosensitive channel.